The following is a 38-amino-acid chain: Large ribosomal subunit protein bL36 (38 aa).

This sequence belongs to the bacterial ribosomal protein bL36 family.

The polypeptide is Large ribosomal subunit protein bL36 (Chloroherpeton thalassium (strain ATCC 35110 / GB-78)).